We begin with the raw amino-acid sequence, 421 residues long: Nuclear envelope integral membrane protein 2 (421 aa).

An N-terminal signal peptide occupies residues 1-22 (MLPRLWWLVLWLQPLATLPASA). Transmembrane regions (helical) follow at residues 64–84 (YMWS…IVYI), 147–167 (NIVD…FLYA), 175–195 (VFYY…FVLL), 206–226 (TFGA…CQLM), 238–258 (MYIL…CYSH), and 281–301 (LVYT…VLLF).

It belongs to the NEMP family. In the ovary, highly expressed in somatic cells.

It localises to the nucleus inner membrane. This Mus musculus (Mouse) protein is Nuclear envelope integral membrane protein 2 (Nemp2).